Reading from the N-terminus, the 228-residue chain is ATP synthase subunit a (228 aa).

The next 7 membrane-spanning stretches (helical) occupy residues 16–36 (GQEW…FIIA), 45–65 (LVPT…ISMG), 80–100 (LIGS…IPGF), 106–126 (NINF…YLGI), 138–158 (FMGP…ISHL), 178–198 (FLMV…FFLL), and 201–221 (FGVL…AGSI).

This sequence belongs to the ATPase A chain family. As to quaternary structure, F-type ATPases have 2 components, CF(1) - the catalytic core - and CF(0) - the membrane proton channel. CF(1) has five subunits: alpha(3), beta(3), gamma(1), delta(1), epsilon(1). CF(0) has three main subunits: a(1), b(2) and c(9-12). The alpha and beta chains form an alternating ring which encloses part of the gamma chain. CF(1) is attached to CF(0) by a central stalk formed by the gamma and epsilon chains, while a peripheral stalk is formed by the delta and b chains.

It localises to the cell inner membrane. Functionally, key component of the proton channel; it plays a direct role in the translocation of protons across the membrane. The sequence is that of ATP synthase subunit a from Aliarcobacter butzleri (strain RM4018) (Arcobacter butzleri).